Reading from the N-terminus, the 158-residue chain is Large ribosomal subunit protein uL16 (158 aa).

The tract at residues 1 to 22 (MLSPKRTKYRKQQRGRMKGKAT) is disordered.

It belongs to the universal ribosomal protein uL16 family. In terms of assembly, part of the 50S ribosomal subunit.

Functionally, binds 23S rRNA and is also seen to make contacts with the A and possibly P site tRNAs. This chain is Large ribosomal subunit protein uL16, found in Synechococcus sp. (strain JA-3-3Ab) (Cyanobacteria bacterium Yellowstone A-Prime).